The primary structure comprises 134 residues: 6,7-dimethyl-8-ribityllumazine synthase (134 aa).

Residues Phe12, 44 to 46, and 68 to 70 contribute to the 5-amino-6-(D-ribitylamino)uracil site; these read VFD and SVI. 73–74 provides a ligand contact to (2S)-2-hydroxy-3-oxobutyl phosphate; it reads ET. The Proton donor role is filled by His76. Leu101 lines the 5-amino-6-(D-ribitylamino)uracil pocket. Arg116 is a binding site for (2S)-2-hydroxy-3-oxobutyl phosphate.

The protein belongs to the DMRL synthase family.

It carries out the reaction (2S)-2-hydroxy-3-oxobutyl phosphate + 5-amino-6-(D-ribitylamino)uracil = 6,7-dimethyl-8-(1-D-ribityl)lumazine + phosphate + 2 H2O + H(+). The protein operates within cofactor biosynthesis; riboflavin biosynthesis; riboflavin from 2-hydroxy-3-oxobutyl phosphate and 5-amino-6-(D-ribitylamino)uracil: step 1/2. Functionally, catalyzes the formation of 6,7-dimethyl-8-ribityllumazine by condensation of 5-amino-6-(D-ribitylamino)uracil with 3,4-dihydroxy-2-butanone 4-phosphate. This is the penultimate step in the biosynthesis of riboflavin. The protein is 6,7-dimethyl-8-ribityllumazine synthase of Methanosarcina mazei (strain ATCC BAA-159 / DSM 3647 / Goe1 / Go1 / JCM 11833 / OCM 88) (Methanosarcina frisia).